Reading from the N-terminus, the 225-residue chain is CRISPR pre-crRNA endoribonuclease Cas5d (225 aa).

This sequence belongs to the CRISPR-associated protein Cas5 family. Subtype I-C/Dvulg subfamily. Does not require a metal cofactor. is required as a cofactor.

In terms of biological role, CRISPR (clustered regularly interspaced short palindromic repeat) is an adaptive immune system that provides protection against mobile genetic elements (viruses, transposable elements and conjugative plasmids). CRISPR clusters contain spacers, sequences complementary to antecedent mobile elements, and target invading nucleic acids. CRISPR clusters are transcribed and processed into CRISPR RNA (crRNA). This protein is a sequence-specific endonuclease that cleaves pre-crRNA at G21 into mature crRNA. Does not cleave pre-crRNA associated with the T.thermophilus strain HB27 Cas5 protein (AC Q746C2) CRISPR locus. The reaction mechanism may proceed by an intramolecular attack of the 2'-hydroxyl group of G21 on the scissile phosphodiester, cutting the precursor 3' to G21 residue yielding 5'-hydroxyl and 2' and/or 3' ends lacking a hydroxyl group (perhaps a 2'/3' cyclic phosphodiester). In Mannheimia succiniciproducens (strain KCTC 0769BP / MBEL55E), this protein is CRISPR pre-crRNA endoribonuclease Cas5d.